We begin with the raw amino-acid sequence, 114 residues long: Pancreatic progenitor cell differentiation and proliferation factor (114 aa).

S9 is subject to Phosphoserine. Disordered regions lie at residues 22 to 47 (GSTS…PGLP) and 75 to 114 (AEHS…GPPS). A compositionally biased stretch (low complexity) spans 23-33 (STSSNSSCSST). The segment covering 102–114 (GGQSSTASAGPPS) has biased composition (polar residues).

The protein belongs to the PPDPF family.

Its function is as follows. Probable regulator of exocrine pancreas development. The sequence is that of Pancreatic progenitor cell differentiation and proliferation factor (PPDPF) from Homo sapiens (Human).